A 261-amino-acid chain; its full sequence is Cytochrome c oxidase subunit 3 (261 aa).

The Mitochondrial matrix portion of the chain corresponds to 1–15 (MTHQTHACHMVNPSP). Residues 16–34 (WPLTGALSGLLMTSGLIMW) form a helical membrane-spanning segment. Residues 35–40 (FHFNST) are Mitochondrial intermembrane-facing. Residues 41 to 66 (TLLMLGLTTNMLTMYQWWRDVIREST) form a helical membrane-spanning segment. Topologically, residues 67-72 (FQGHHT) are mitochondrial matrix. Residues 73 to 105 (PNVQKGLRYGMILFIISEVLFFTGFFWAFYHSS) traverse the membrane as a helical segment. The Mitochondrial intermembrane portion of the chain corresponds to 106-128 (LAPTPELGGCWPPTGIHPLNPLE). Residues 129 to 152 (VPLLNTSVLLASGVSITWAHHSLM) form a helical membrane-spanning segment. Residues 153–155 (EGN) are Mitochondrial matrix-facing. A helical membrane pass occupies residues 156-183 (RNHMLQALFITIALGVYFTLLQASEYYE). The Mitochondrial intermembrane portion of the chain corresponds to 184 to 190 (APFTISD). The helical transmembrane segment at 191–223 (GVYGSTFFVATGFHGLHVIIGSTFLIVCFFRQL) threads the bilayer. The Mitochondrial matrix portion of the chain corresponds to 224–232 (KFHFTSSHH). Residues 233 to 256 (FGFEAAAWYWHFVDVVWLFLYVSI) traverse the membrane as a helical segment. The Mitochondrial intermembrane segment spans residues 257 to 261 (YWWGS).

It belongs to the cytochrome c oxidase subunit 3 family. As to quaternary structure, component of the cytochrome c oxidase (complex IV, CIV), a multisubunit enzyme composed of 14 subunits. The complex is composed of a catalytic core of 3 subunits MT-CO1, MT-CO2 and MT-CO3, encoded in the mitochondrial DNA, and 11 supernumerary subunits COX4I, COX5A, COX5B, COX6A, COX6B, COX6C, COX7A, COX7B, COX7C, COX8 and NDUFA4, which are encoded in the nuclear genome. The complex exists as a monomer or a dimer and forms supercomplexes (SCs) in the inner mitochondrial membrane with NADH-ubiquinone oxidoreductase (complex I, CI) and ubiquinol-cytochrome c oxidoreductase (cytochrome b-c1 complex, complex III, CIII), resulting in different assemblies (supercomplex SCI(1)III(2)IV(1) and megacomplex MCI(2)III(2)IV(2)).

The protein localises to the mitochondrion inner membrane. The catalysed reaction is 4 Fe(II)-[cytochrome c] + O2 + 8 H(+)(in) = 4 Fe(III)-[cytochrome c] + 2 H2O + 4 H(+)(out). Its function is as follows. Component of the cytochrome c oxidase, the last enzyme in the mitochondrial electron transport chain which drives oxidative phosphorylation. The respiratory chain contains 3 multisubunit complexes succinate dehydrogenase (complex II, CII), ubiquinol-cytochrome c oxidoreductase (cytochrome b-c1 complex, complex III, CIII) and cytochrome c oxidase (complex IV, CIV), that cooperate to transfer electrons derived from NADH and succinate to molecular oxygen, creating an electrochemical gradient over the inner membrane that drives transmembrane transport and the ATP synthase. Cytochrome c oxidase is the component of the respiratory chain that catalyzes the reduction of oxygen to water. Electrons originating from reduced cytochrome c in the intermembrane space (IMS) are transferred via the dinuclear copper A center (CU(A)) of subunit 2 and heme A of subunit 1 to the active site in subunit 1, a binuclear center (BNC) formed by heme A3 and copper B (CU(B)). The BNC reduces molecular oxygen to 2 water molecules using 4 electrons from cytochrome c in the IMS and 4 protons from the mitochondrial matrix. The polypeptide is Cytochrome c oxidase subunit 3 (MT-CO3) (Gazella saudiya (Saudi gazelle)).